The sequence spans 197 residues: Rac-like GTP-binding protein RAC1 (197 aa).

Gly13–Thr20 provides a ligand contact to GTP. An Effector region motif is present at residues Tyr35–Phe43. GTP-binding positions include Asp60 to Gln64 and Thr118 to Asp121. Cys194 carries the post-translational modification Cysteine methyl ester. A lipid anchor (S-geranylgeranyl cysteine) is attached at Cys194. A propeptide spans Ser195–Leu197 (removed in mature form).

The protein belongs to the small GTPase superfamily. Rho family.

It localises to the cytoplasm. It is found in the membrane. Functionally, inactive GDP-bound Rho GTPases reside in the cytosol, are found in a complex with Rho GDP-dissociation inhibitors (Rho GDIs), and are released from the GDI protein in order to translocate to membranes upon activation. This chain is Rac-like GTP-binding protein RAC1 (RAC1), found in Lotus japonicus (Lotus corniculatus var. japonicus).